Here is a 253-residue protein sequence, read N- to C-terminus: 5'-nucleotidase SurE (253 aa).

A divalent metal cation contacts are provided by D8, D9, S40, and N93.

Belongs to the SurE nucleotidase family. Requires a divalent metal cation as cofactor.

The protein localises to the cytoplasm. The enzyme catalyses a ribonucleoside 5'-phosphate + H2O = a ribonucleoside + phosphate. In terms of biological role, nucleotidase that shows phosphatase activity on nucleoside 5'-monophosphates. The polypeptide is 5'-nucleotidase SurE (Methylobacterium sp. (strain 4-46)).